The chain runs to 109 residues: U4-lycotoxin-Ls1d (109 aa).

The N-terminal stretch at 1 to 22 (MKVLVLFSVLFLTLFSYSSTEA) is a signal peptide. Residues 23 to 44 (MDEFDSDAEEDMLSLMANEQVR) constitute a propeptide that is removed on maturation. The knottin domain stretch occupies residues 45-88 (AKACTPRLHDCSHDRHSCCRGELFKDVCYCFYPEGEDKTEVCSC). 4 disulfides stabilise this stretch: cysteine 48–cysteine 63, cysteine 55–cysteine 72, cysteine 62–cysteine 88, and cysteine 74–cysteine 86. The segment at 89 to 108 (QQPKSHKYIEKVVDKARTVV) is linear cationic cytotoxin domain.

Belongs to the neurotoxin 19 (CSTX) family. 05 (U4-Lctx) subfamily. In terms of tissue distribution, expressed by the venom gland.

The protein localises to the secreted. Enhances the high-affinity desensitization of human P2RX3 purinoceptors. The protein is U4-lycotoxin-Ls1d of Lycosa singoriensis (Wolf spider).